A 375-amino-acid chain; its full sequence is Muconate cycloisomerase 1 (375 aa).

The Proton acceptor role is filled by lysine 171. Residues aspartate 200, glutamate 226, and aspartate 251 each coordinate Mn(2+). The active-site Proton donor is glutamate 329.

It belongs to the mandelate racemase/muconate lactonizing enzyme family. Homooctamer. Requires Mn(2+) as cofactor.

The enzyme catalyses (S)-muconolactone = cis,cis-muconate + H(+). The protein operates within aromatic compound metabolism; beta-ketoadipate pathway; 5-oxo-4,5-dihydro-2-furylacetate from catechol: step 2/3. In terms of biological role, catalyzes a syn cycloisomerization. The sequence is that of Muconate cycloisomerase 1 (catB) from Pseudomonas putida (Arthrobacter siderocapsulatus).